The following is a 319-amino-acid chain: Sliding-clamp-loader large subunit (319 aa).

Residues 12 to 15 (EQKY), Ile-24, 53 to 58 (GTGKTT), and Arg-205 each bind ATP.

This sequence belongs to the Tevenvirinae sliding-clamp-loader large subunit family. The sliding-clamp-loader consists of 4 large subunits and 1 small subunit. Interacts with the sliding clamp; this interaction allows the sliding-clamp-loader to open the sliding clamp. Part of the replicase complex that includes the DNA polymerase, the polymerase clamp, the clamp loader complex, the single-stranded DNA binding protein, the primase, the helicase and the helicase assembly factor.

Forms the sliding-clamp-loader together with the small subunit. Functions as an ATPase enzyme. The clamp loader holds the clamp in an open conformation and places it onto the DNA. 4 ATP molecules must bind to the sliding-clamp-loader before the latter can open the sliding clamp. ATP hydrolysis triggers the detachment of the sliding clamp from the sliding-clamp-loader, freeing the sliding clamp to track along DNA. This Enterobacteria phage T4 (Bacteriophage T4) protein is Sliding-clamp-loader large subunit (44).